Reading from the N-terminus, the 327-residue chain is Fructose-1,6-bisphosphatase class 1 (327 aa).

Mg(2+) contacts are provided by E84, D103, L105, and D106. Substrate-binding positions include 106–109, N197, and K263; that span reads DGSS. Residue E269 coordinates Mg(2+).

This sequence belongs to the FBPase class 1 family. Homotetramer. Mg(2+) is required as a cofactor.

The protein localises to the cytoplasm. It carries out the reaction beta-D-fructose 1,6-bisphosphate + H2O = beta-D-fructose 6-phosphate + phosphate. It participates in carbohydrate biosynthesis; gluconeogenesis. The protein is Fructose-1,6-bisphosphatase class 1 of Idiomarina loihiensis (strain ATCC BAA-735 / DSM 15497 / L2-TR).